Consider the following 154-residue polypeptide: MKHVLASTAAGLMALGLASSAIAAGLSPEEQIETRQAGYEFMGWNMGKIKANLEGEYNAAQVEAAANVIAAIANSGMGALYGPGTDKNVGDVKTRVKPEFFQNMEDVGKIAREFVGAANTLAEVAATGEAEAVKTAFGDVGAACKSCHEKYRAK.

Positions 1–23 (MKHVLASTAAGLMALGLASSAIA) are cleaved as a signal peptide. Residues Arg35, Gln36, Arg95, Cys144, Cys147, and His148 each coordinate heme c.

In terms of assembly, homodimer. Binds 1 heme c group covalently per subunit.

Functionally, cytochrome c' is the most widely occurring bacterial c-type cytochrome. Cytochromes c' are high-spin proteins and the heme has no sixth ligand. Their exact function is not known. The protein is Cytochrome c' (cycA) of Allochromatium vinosum (strain ATCC 17899 / DSM 180 / NBRC 103801 / NCIMB 10441 / D) (Chromatium vinosum).